We begin with the raw amino-acid sequence, 232 residues long: Flagellar L-ring protein (232 aa).

An N-terminal signal peptide occupies residues 1-15; that stretch reads MKKVLFYVLPFAFFG. Residue Cys16 is the site of N-palmitoyl cysteine attachment. The S-diacylglycerol cysteine moiety is linked to residue Cys16.

Belongs to the FlgH family. The basal body constitutes a major portion of the flagellar organelle and consists of four rings (L,P,S, and M) mounted on a central rod.

The protein resides in the cell outer membrane. It localises to the bacterial flagellum basal body. Assembles around the rod to form the L-ring and probably protects the motor/basal body from shearing forces during rotation. In Campylobacter jejuni subsp. jejuni serotype O:6 (strain 81116 / NCTC 11828), this protein is Flagellar L-ring protein.